A 620-amino-acid polypeptide reads, in one-letter code: E3 ubiquitin-protein ligase AMFR (620 aa).

7 helical membrane-spanning segments follow: residues 75–95 (LFVW…GKVI), 115–135 (FWNF…VQRV), 138–158 (VVLW…VQLC), 179–199 (VLAL…LCAL), 201–221 (GHIH…LVTV), 247–267 (SSYI…LDLM), and 269–289 (HIHM…VIFM). An RING-type; atypical zinc finger spans residues 334–372 (CAICWDSMTTARKLPCGHLFHNSCLRSWLEQDTSCPTCR). One can recognise a CUE domain in the interval 449–491 (QLNGMAHQIQEMFPQVPYHLILQDLQLTRSVEVTTDNILEGRI). Residues 510 to 526 (ASEDGAGASSGSEVAAP) are compositionally biased toward low complexity. 2 disordered regions span residues 510–544 (ASED…SADE) and 569–598 (PEDG…DSVT). The span at 531 to 544 (FEVRGSRFSKSADE) shows a compositional bias: basic and acidic residues. Residues 581 to 595 (DNDDSVPSIEDEDSD) are compositionally biased toward acidic residues.

In terms of tissue distribution, widely expressed.

It localises to the endoplasmic reticulum membrane. The catalysed reaction is [E2 ubiquitin-conjugating enzyme]-S-ubiquitinyl-L-cysteine + [acceptor protein]-L-cysteine = [E2 ubiquitin-conjugating enzyme]-L-cysteine + [acceptor protein]-S-ubiquitinyl-L-cysteine.. The protein operates within protein modification; protein ubiquitination. Functionally, E3 ubiquitin-protein ligase that mediates the polyubiquitination of lysine and cysteine residues on target proteins. May participate in the final step of endoplasmic reticulum-associated degradation (ERAD). Required for proper lipid homeostasis. This chain is E3 ubiquitin-protein ligase AMFR, found in Danio rerio (Zebrafish).